The primary structure comprises 94 residues: Large ribosomal subunit protein uL24c (94 aa).

This sequence belongs to the universal ribosomal protein uL24 family. Part of the 50S ribosomal subunit.

The protein localises to the plastid. The protein resides in the chloroplast. Its function is as follows. One of two assembly initiator proteins, it binds directly to the 5'-end of the 23S rRNA, where it nucleates assembly of the 50S subunit. This chain is Large ribosomal subunit protein uL24c (rpl24), found in Cyanidium caldarium (Red alga).